A 430-amino-acid polypeptide reads, in one-letter code: Cysteate synthase (430 aa).

Lysine 106 carries the post-translational modification N6-(pyridoxal phosphate)lysine. Pyridoxal 5'-phosphate contacts are provided by asparagine 132 and threonine 381.

The protein belongs to the threonine synthase family. Cysteate synthase subfamily. In terms of assembly, homotrimer. Pyridoxal 5'-phosphate is required as a cofactor.

It carries out the reaction O-phospho-L-serine + sulfite + H(+) = L-cysteate + phosphate. Its pathway is cofactor biosynthesis; coenzyme M biosynthesis. Functionally, specifically catalyzes the beta-elimination of phosphate from L-phosphoserine and the beta-addition of sulfite to the dehydroalanine intermediate to produce L-cysteate. The polypeptide is Cysteate synthase (Methanoculleus marisnigri (strain ATCC 35101 / DSM 1498 / JR1)).